A 97-amino-acid chain; its full sequence is Ferredoxin-like protein (97 aa).

One can recognise a 4Fe-4S ferredoxin-type domain in the interval 56-86 (GQVEVIADGCMECGTCRVLCEESGDIDWSYP).

To ferredoxins from P.putida and C.tartarivorum, ferredoxin I from A.vinelandii, ferredoxin II from D.desulfuricans.

In terms of biological role, could be a 3Fe-4S cluster-containing protein. The protein is Ferredoxin-like protein (fixX) of Sinorhizobium fredii (strain NBRC 101917 / NGR234).